We begin with the raw amino-acid sequence, 447 residues long: Phosphoglucosamine mutase (447 aa).

Catalysis depends on Ser102, which acts as the Phosphoserine intermediate. 4 residues coordinate Mg(2+): Ser102, Asp241, Asp243, and Asp245. Phosphoserine is present on Ser102.

This sequence belongs to the phosphohexose mutase family. Mg(2+) serves as cofactor. Activated by phosphorylation.

It carries out the reaction alpha-D-glucosamine 1-phosphate = D-glucosamine 6-phosphate. In terms of biological role, catalyzes the conversion of glucosamine-6-phosphate to glucosamine-1-phosphate. The sequence is that of Phosphoglucosamine mutase from Methylococcus capsulatus (strain ATCC 33009 / NCIMB 11132 / Bath).